Reading from the N-terminus, the 34-residue chain is Hemopexin (34 aa).

The disordered stretch occupies residues 1-25; that stretch reads RPLTQHKPHTPGDEHPHGAEPPGXD.

This sequence belongs to the hemopexin family. Expressed by the liver and secreted in plasma.

The protein resides in the secreted. Binds heme and transports it to the liver for breakdown and iron recovery, after which the free hemopexin returns to the circulation. This chain is Hemopexin (HPX), found in Gallus gallus (Chicken).